Consider the following 23-residue polypeptide: Paralytic peptide 2 (23 aa).

A disulfide bond links Cys-7 and Cys-19.

This sequence belongs to the GBP/PSP1/paralytic peptide family. In terms of tissue distribution, hemolymph.

Functionally, causes rapid, rigid paralysis when injected into Lepidopteran larvae. The physiological role may be to reduce hemolymph loss following injury and promote wound healing. In Manduca sexta (Tobacco hawkmoth), this protein is Paralytic peptide 2.